The sequence spans 215 residues: MKLTSHEARVIGCLLEKEKTTPEQYPLSLNGLTLACNQKSSREPVMNLSEADTQAALDSLAKKRLVAEQSGFGSRVVKYKHRFCNTEFSDLQLSEDKVAIICLLLLRGPQTAGELRTRSNRLYGFNDVAQVEQALNSLAQMEPALVRQLPREPGKRESRFIELISEAETQLDTQLATQPAQASSLANDELVERVALLEQQVAELKLQVAELLGKI.

This sequence belongs to the UPF0502 family.

This chain is UPF0502 protein Shew_1617, found in Shewanella loihica (strain ATCC BAA-1088 / PV-4).